The sequence spans 653 residues: 4-alpha-glucanotransferase (653 aa).

Glu-123 acts as the Nucleophile in catalysis. Asp-214 functions as the Proton donor in the catalytic mechanism.

This sequence belongs to the glycosyl hydrolase 57 family.

It carries out the reaction Transfers a segment of a (1-&gt;4)-alpha-D-glucan to a new position in an acceptor, which may be glucose or a (1-&gt;4)-alpha-D-glucan.. This chain is 4-alpha-glucanotransferase, found in Thermococcus kodakarensis (strain ATCC BAA-918 / JCM 12380 / KOD1) (Pyrococcus kodakaraensis (strain KOD1)).